Here is a 475-residue protein sequence, read N- to C-terminus: Dihydrolipoyl dehydrogenase (475 aa).

Residues glutamate 36–cysteine 45, lysine 54, and glycine 117 each bind FAD. Cysteine 45 and cysteine 50 form a disulfide bridge. NAD(+) contacts are provided by residues glycine 182 to isoleucine 186, glutamate 205, valine 238, and alanine 270 to arginine 273. Positions 313 and 321 each coordinate FAD. The active-site Proton acceptor is the histidine 445.

The protein belongs to the class-I pyridine nucleotide-disulfide oxidoreductase family. The cofactor is FAD.

The protein localises to the cytoplasm. It catalyses the reaction N(6)-[(R)-dihydrolipoyl]-L-lysyl-[protein] + NAD(+) = N(6)-[(R)-lipoyl]-L-lysyl-[protein] + NADH + H(+). Its function is as follows. The branched-chain alpha-keto dehydrogenase complex catalyzes the overall conversion of alpha-keto acids to acyl-CoA and CO(2). It contains multiple copies of 3 enzymatic components: branched-chain alpha-keto acid decarboxylase (E1), lipoamide acyltransferase (E2) and lipoamide dehydrogenase (E3). The chain is Dihydrolipoyl dehydrogenase (lpd) from Vibrio cholerae serotype O1 (strain ATCC 39315 / El Tor Inaba N16961).